We begin with the raw amino-acid sequence, 117 residues long: Putative membrane protein insertion efficiency factor (117 aa).

A disordered region spans residues 87-117; that stretch reads RKGGPSAAEPAIEGHIPSSPAAETPSHVQGA.

This sequence belongs to the UPF0161 family.

Its subcellular location is the cell membrane. Its function is as follows. Could be involved in insertion of integral membrane proteins into the membrane. The polypeptide is Putative membrane protein insertion efficiency factor (Streptomyces avermitilis (strain ATCC 31267 / DSM 46492 / JCM 5070 / NBRC 14893 / NCIMB 12804 / NRRL 8165 / MA-4680)).